Reading from the N-terminus, the 347-residue chain is Quinolinate synthase (347 aa).

The iminosuccinate site is built by His47 and Ser68. Cys113 provides a ligand contact to [4Fe-4S] cluster. Residues 139–141 (YAN) and Ser156 contribute to the iminosuccinate site. Cys200 contacts [4Fe-4S] cluster. Iminosuccinate is bound by residues 226-228 (HPE) and Thr243. [4Fe-4S] cluster is bound at residue Cys297.

The protein belongs to the quinolinate synthase family. Type 1 subfamily. The cofactor is [4Fe-4S] cluster.

The protein resides in the cytoplasm. It carries out the reaction iminosuccinate + dihydroxyacetone phosphate = quinolinate + phosphate + 2 H2O + H(+). The protein operates within cofactor biosynthesis; NAD(+) biosynthesis; quinolinate from iminoaspartate: step 1/1. In terms of biological role, catalyzes the condensation of iminoaspartate with dihydroxyacetone phosphate to form quinolinate. The polypeptide is Quinolinate synthase (Escherichia coli O9:H4 (strain HS)).